The sequence spans 2190 residues: Voltage-dependent L-type calcium channel subunit alpha-1D (2190 aa).

Residues 1 to 10 show a composition bias toward low complexity; sequence MQHHQQQQPE. 2 disordered regions span residues 1–44 and 57–96; these read MQHH…SKQT and QAKA…SNSR. The Cytoplasmic segment spans residues 1 to 121; it reads MQHHQQQQPE…RACISLVEWK (121 aa). Polar residues-rich tracts occupy residues 31-44 and 63-76; these read PTTQ…SKQT and NMNT…GSLS. The segment covering 77 to 88 has biased composition (basic residues); that stretch reads QRKRQQYAKSKK. Residues 108–404 form an I repeat; that stretch reads NPIRRACISL…LVLGVLSGEF (297 aa). Residues 122–140 form a helical membrane-spanning segment; it reads PFDIFILLSIFANCVALAV. Over 141 to 158 the chain is Extracellular; the sequence is YIPFPEDDSNSTNHNLEK. N150 is a glycosylation site (N-linked (GlcNAc...) asparagine). Residues 159 to 178 form a helical membrane-spanning segment; it reads VEYAFLIIFTVETFLKIIAY. Topologically, residues 179-190 are cytoplasmic; the sequence is GLLLHPNAYVRN. The chain crosses the membrane as a helical span at residues 191–209; that stretch reads GWNLLDFVIVVVGLFSVIL. Residues 210 to 230 are Extracellular-facing; it reads EQLTKETEGGSHSGGKPGGFD. Residues 231 to 249 traverse the membrane as a helical segment; that stretch reads VKALRAFRVLRPLRLVSGV. Over 250–268 the chain is Cytoplasmic; the sequence is PSLQVVLNSIIKAMVPLLH. The chain crosses the membrane as a helical span at residues 269-288; the sequence is IALLVLFVIIIYAIIGLELF. The Extracellular portion of the chain corresponds to 289–376; sequence IGKMHKSCFL…WVNDAIGCEW (88 aa). N-linked (GlcNAc...) asparagine glycosylation occurs at N324. E359 lines the Ca(2+) pocket. The chain crosses the membrane as a helical span at residues 377 to 401; that stretch reads PWIYFVSLIILGSFFVLNLVLGVLS. Residues 402 to 544 lie on the Cytoplasmic side of the membrane; sequence GEFSKEREKA…RKCRAAVKSV (143 aa). The binding to the beta subunit stretch occupies residues 424 to 441; it reads QQLEEDLKGYLDWITQAE. A disordered region spans residues 478–500; it reads GRSSNKHASMPTSETESVNTENV. Residues 530 to 776 form an II repeat; that stretch reads NRFNRRKCRA…VFLAIAVDNL (247 aa). Residues 545–564 traverse the membrane as a helical segment; that stretch reads TFYWLVIVLVFLNTLTISSE. The Extracellular segment spans residues 565–579; sequence HYNQPDWLTQIQDIA. A helical membrane pass occupies residues 580–598; it reads NKVLLALFTCEMLVKMYSL. Over 599–606 the chain is Cytoplasmic; the sequence is GLQAYFVS. The chain crosses the membrane as a helical span at residues 607-625; that stretch reads LFNRFDCFVVCGGIVETIL. Over 626 to 635 the chain is Extracellular; it reads VELEIMSPLG. A helical transmembrane segment spans residues 636 to 654; sequence ISVFRCVRLLRIFKVTRHW. The Cytoplasmic segment spans residues 655 to 673; the sequence is ASLSNLVASLLNSMKSIAS. A helical transmembrane segment spans residues 674 to 694; the sequence is LLLLLFLFIIIFSLLGMQLFG. Residues 695 to 748 are Extracellular-facing; it reads GKFNFDETQTKRSTFDNFPQALLTVFQILTGEDWNAVMYDGIMAYGGPSSSGMI. Position 726 (E726) interacts with Ca(2+). Residues 749 to 773 traverse the membrane as a helical segment; it reads VCIYFIILFICGNYILLNVFLAIAV. At 774-907 the chain is on the cytoplasmic side; that stretch reads DNLADAESLN…VGCHRLINHH (134 aa). Basic and acidic residues predominate over residues 787 to 823; it reads KEEAEEKERKKNARKESLENKKSEKSEGDQKKPKDSK. Positions 787–869 are disordered; sequence KEEAEEKERK…VPAGPRPRRI (83 aa). Positions 847–859 are enriched in acidic residues; the sequence is VGEDEEDEEDEPE. One copy of the III repeat lies at 894 to 1176; sequence NPIRVGCHRL…IFVGFVIVTF (283 aa). The helical transmembrane segment at 908–926 threads the bilayer; sequence IFTNLILVFIMLSSVSLAA. The Extracellular segment spans residues 927–942; that stretch reads EDPIRSHSFRNNILGY. A helical membrane pass occupies residues 943 to 962; it reads ADYVFTSMFTFEIILKMTAF. At 963–974 the chain is on the cytoplasmic side; it reads GAFLHKGSFCRN. A helical membrane pass occupies residues 975–993; sequence YFNLLDLLVVGVSLVSFGI. The Extracellular segment spans residues 994–999; that stretch reads QSSAIS. A helical transmembrane segment spans residues 1000–1019; sequence VVKILRVLRVLRPLRAINRA. The Cytoplasmic segment spans residues 1020–1038; the sequence is KGLKHVVQCVFVAIRTIGN. A helical transmembrane segment spans residues 1039-1058; it reads IMIVTTLLQFMFACIGVQLF. The Extracellular portion of the chain corresponds to 1059–1148; it reads KGKFYKCTDE…VGPVYNYRVE (90 aa). Residues 1096–1186 form a dihydropyridine binding region; sequence RVWQNSDFNF…QEQGEQEYKN (91 aa). Residue E1122 coordinates Ca(2+). A helical transmembrane segment spans residues 1149-1169; it reads ISIFFIIYIIIIAFFMMNIFV. The Cytoplasmic segment spans residues 1170–1226; that stretch reads GFVIVTFQEQGEQEYKNCELDKNQRQCVEYALKARPLRRYIPKNPYQYKFWYVVNST. Residues 1213–1496 form an IV repeat; the sequence is NPYQYKFWYV…LFVAVIMDNF (284 aa). The chain crosses the membrane as a helical span at residues 1227–1245; sequence GFEYIMFVLIMLNTLCLAM. Residues 1246 to 1260 are Extracellular-facing; it reads QHYGQSKLFNDAMDI. A helical transmembrane segment spans residues 1261–1280; sequence MNMVFTGVFTVEMVLKLIAF. Topologically, residues 1281–1297 are cytoplasmic; sequence KPKIFVRKKERWLGYFS. Residues 1298-1319 form a helical membrane-spanning segment; it reads DAWNTFDSLIVIGSIVDVVLSE. Topologically, residues 1320–1342 are extracellular; the sequence is ADPKPTETVTTDESGNSEDSARI. The helical transmembrane segment at 1343 to 1362 threads the bilayer; sequence SITFFRLFRVMRLVKLLSRG. The Cytoplasmic portion of the chain corresponds to 1363-1381; the sequence is EGIRTLLWTFIKSFQALPY. Residues 1382-1401 traverse the membrane as a helical segment; it reads VALLIAMLFFIYAVIGMQVF. Topologically, residues 1402 to 1468 are extracellular; sequence GKVAMRDNNQ…GEEYTCGSNF (67 aa). The interval 1449–1515 is dihydropyridine binding; the sequence is RCDPESDYNP…LGPHHLDEFK (67 aa). The tract at residues 1461 to 1504 is phenylalkylamine binding; it reads EYTCGSNFAIIYFISFYMLCAFLIINLFVAVIMDNFDYLTRDWS. Residues 1469–1493 traverse the membrane as a helical segment; it reads AIIYFISFYMLCAFLIINLFVAVIM. Over 1494 to 2190 the chain is Cytoplasmic; the sequence is DNFDYLTRDW…ADEMICITSL (697 aa). Disordered regions lie at residues 1736–1787, 1803–1833, 1917–1952, and 1995–2025; these read THRP…NANL, FGSH…SRRT, HGFF…RSSF, and SSKA…HTPY. Over residues 1805–1823 the composition is skewed to basic and acidic residues; it reads SHEHRSENGYHSYSRADHE. The segment covering 1824–1833 has biased composition (basic residues); sequence KRRRPSSRRT.

Belongs to the calcium channel alpha-1 subunit (TC 1.A.1.11) family. CACNA1D subfamily. Voltage-dependent calcium channels are multisubunit complexes, consisting of alpha-1, alpha-2, beta and delta subunits in a 1:1:1:1 ratio. The channel activity is directed by the pore-forming and voltage-sensitive alpha-1 subunit. In many cases, this subunit is sufficient to generate voltage-sensitive calcium channel activity. The auxiliary subunits beta and alpha-2/delta linked by a disulfide bridge regulate the channel activity. Interacts with RIMBP2. Expressed in the basilar papilla of the cochlea.

Its subcellular location is the membrane. The enzyme catalyses Ca(2+)(in) = Ca(2+)(out). In terms of biological role, the isoform alpha-1D gives rise to L-type calcium currents. Long-lasting (L-type) calcium channels belong to the 'high-voltage activated' (HVA) group. The chain is Voltage-dependent L-type calcium channel subunit alpha-1D (CACNA1D) from Gallus gallus (Chicken).